Consider the following 199-residue polypeptide: NAD(P)H dehydrogenase (quinone) (199 aa).

Residues 4 to 190 form the Flavodoxin-like domain; sequence MLVLYYSAYG…DGARFQGRRV (187 aa). FMN contacts are provided by residues 10 to 15 and 78 to 80; these read SAYGYM and TRY. NAD(+) is bound at residue Y12. Position 98 (W98) interacts with substrate. FMN-binding positions include 113-119 and H134; that span reads STATQHG. A disordered region spans residues 158-181; that stretch reads GAPYGMTTTADGDGSRQPSAQELD. The span at 163–177 shows a compositional bias: polar residues; that stretch reads MTTTADGDGSRQPSA.

The protein belongs to the WrbA family. FMN is required as a cofactor.

It carries out the reaction a quinone + NADH + H(+) = a quinol + NAD(+). It catalyses the reaction a quinone + NADPH + H(+) = a quinol + NADP(+). The chain is NAD(P)H dehydrogenase (quinone) from Brucella abortus (strain S19).